We begin with the raw amino-acid sequence, 228 residues long: MTARRAPAVNRDGLEQMLVEGTTALDLALTDAQHNQLLDYVALLGKWNAVYNLTAIRDPKQMLIQHILDSLSIVSHLRGRASARVLDVGSGGGLPGIVLAIVEPDWQITLNDIVQKKSAFQTQMRAELKLANLSVVTGRVESLQPGVEVPEKFDMIVSRAFADLSDFVKLARHLVAPGGSIWAMKGVHPDDEIARLPEGSRVKQTIRLAVPMLDAERHLIEVAVDEAN.

S-adenosyl-L-methionine contacts are provided by residues G89, L94, 140–141 (VE), and R159.

This sequence belongs to the methyltransferase superfamily. RNA methyltransferase RsmG family.

The protein localises to the cytoplasm. The catalysed reaction is guanosine(527) in 16S rRNA + S-adenosyl-L-methionine = N(7)-methylguanosine(527) in 16S rRNA + S-adenosyl-L-homocysteine. Specifically methylates the N7 position of guanine in position 527 of 16S rRNA. This chain is Ribosomal RNA small subunit methyltransferase G, found in Burkholderia lata (strain ATCC 17760 / DSM 23089 / LMG 22485 / NCIMB 9086 / R18194 / 383).